We begin with the raw amino-acid sequence, 170 residues long: NADH-quinone oxidoreductase subunit B (170 aa).

[4Fe-4S] cluster-binding residues include cysteine 37, cysteine 38, cysteine 102, and cysteine 131.

Belongs to the complex I 20 kDa subunit family. As to quaternary structure, NDH-1 is composed of 14 different subunits. Subunits NuoB, C, D, E, F, and G constitute the peripheral sector of the complex. It depends on [4Fe-4S] cluster as a cofactor.

It localises to the cell inner membrane. The enzyme catalyses a quinone + NADH + 5 H(+)(in) = a quinol + NAD(+) + 4 H(+)(out). In terms of biological role, NDH-1 shuttles electrons from NADH, via FMN and iron-sulfur (Fe-S) centers, to quinones in the respiratory chain. The immediate electron acceptor for the enzyme in this species is believed to be ubiquinone. Couples the redox reaction to proton translocation (for every two electrons transferred, four hydrogen ions are translocated across the cytoplasmic membrane), and thus conserves the redox energy in a proton gradient. This Citrifermentans bemidjiense (strain ATCC BAA-1014 / DSM 16622 / JCM 12645 / Bem) (Geobacter bemidjiensis) protein is NADH-quinone oxidoreductase subunit B.